The chain runs to 866 residues: DNA replication licensing factor MCM4 (866 aa).

Disordered regions lie at residues 1 to 67, 81 to 107, and 124 to 145; these read MSSP…TSPA, SPLN…TPLR, and GGGS…PVSE. 2 stretches are compositionally biased toward polar residues: residues 47-63 and 81-93; these read DNIS…SLPA and SPLN…SMGS. A phosphoserine mark is found at Ser55 and Ser81. Residue Thr87 is modified to Phosphothreonine. One can recognise an MCM domain in the interval 460–669; sequence IYDRLARAIA…FDKRLASHLV (210 aa). Residue 512–519 coordinates ATP; sequence GDPGTSKS. The Arginine finger signature appears at 644-647; that stretch reads SRFD.

The protein belongs to the MCM family. Component of the Mcm2-7 complex. The complex forms a toroidal hexameric ring with the proposed subunit order Mcm2-Mcm6-Mcm4-Mcm7-Mcm3-Mcm5. Post-translationally, phosphorylated by the catalytic component of the Dbf4-dependent kinase (DDK) complex Cdc7.

It localises to the nucleus. It carries out the reaction ATP + H2O = ADP + phosphate + H(+). In terms of biological role, acts as a component of the Mcm2-7 complex (Mcm complex) which is the putative replicative helicase essential for 'once per cell cycle' DNA replication initiation and elongation in eukaryotic cells. The active ATPase sites in the Mcm2-7 ring are formed through the interaction surfaces of two neighboring subunits such that a critical structure of a conserved arginine finger motif is provided in trans relative to the ATP-binding site of the Walker A box of the adjacent subunit. The six ATPase active sites, however, are likely to contribute differentially to the complex helicase activity. Required for DNA replication and cell proliferation. Essential role in mitotic DNA replication but not in endoreplication. This is DNA replication licensing factor MCM4 (dpa) from Drosophila melanogaster (Fruit fly).